Here is a 53-residue protein sequence, read N- to C-terminus: UPF0391 membrane protein azo1750 (53 aa).

The next 2 helical transmembrane spans lie at 6–26 (VIFLIIAIIAAVFGFGGIAAG) and 30–50 (IAKILFYLFLVIFLVSLVLGM).

Belongs to the UPF0391 family.

It is found in the cell membrane. This Azoarcus sp. (strain BH72) protein is UPF0391 membrane protein azo1750.